A 329-amino-acid polypeptide reads, in one-letter code: Protein Brevis radix-like 4 (329 aa).

The segment at 12-37 (SGTSRHHGQQRRGGSPPPRGRTTSVY) is disordered. Residues 86–142 (REWVAQVEPGVQITFVSLAGGGGNDLKRIRFSREMYDKWQAQKWWGENNERIMELYN) form the BRX 1 domain. Positions 151–263 (LPTPPRSDDG…TTSCSSRDEV (113 aa)) are disordered. 2 stretches are compositionally biased toward low complexity: residues 222–236 (SNPSERAWQQQQQPQ) and 243–252 (AAASDAMDAA). Polar residues predominate over residues 253–263 (RTTSCSSRDEV). A BRX 2 domain is found at 274-329 (TEWVIQDEPGVYITVRELADGTRELRRVRFSRERFAELNAKLWWEENKERIQAQYL).

The protein belongs to the BRX family.

The protein localises to the nucleus. In Oryza sativa subsp. japonica (Rice), this protein is Protein Brevis radix-like 4 (BRXL4).